The following is a 141-amino-acid chain: Hydroperoxide reductase (141 aa).

This sequence belongs to the OsmC/Ohr family. Homodimer.

The protein localises to the cytoplasm. In terms of biological role, reduces organic and inorganic peroxide substrates. Protects the cell against oxidative stress. This chain is Hydroperoxide reductase, found in Mycoplasma genitalium (strain ATCC 33530 / DSM 19775 / NCTC 10195 / G37) (Mycoplasmoides genitalium).